Reading from the N-terminus, the 541-residue chain is Carotenoid 9,10(9',10')-cleavage dioxygenase 1 (541 aa).

The Fe cation site is built by His-222, His-270, His-336, and His-526.

Belongs to the carotenoid oxygenase family. Requires Fe(2+) as cofactor.

The catalysed reaction is all-trans-zeaxanthin + 2 O2 = 4,9-dimethyldodeca-2,4,6,8,10-pentaenedial + 2 (3R)-hydroxy-beta-ionone. In terms of biological role, cleaves a variety of carotenoids at the 9-10 and 9'-10' double bonds. Probably not involved in abscisic acid biosynthesis. In Pisum sativum (Garden pea), this protein is Carotenoid 9,10(9',10')-cleavage dioxygenase 1 (CCD1).